The sequence spans 114 residues: UPF0342 protein LVIS_1488 (114 aa).

Belongs to the UPF0342 family.

This is UPF0342 protein LVIS_1488 from Levilactobacillus brevis (strain ATCC 367 / BCRC 12310 / CIP 105137 / JCM 1170 / LMG 11437 / NCIMB 947 / NCTC 947) (Lactobacillus brevis).